A 409-amino-acid chain; its full sequence is MGGANGKSGLRVWRNARLATMADGVAGLGIVEKGAIATRDGLIIYAGAEASMPALAGPGAETVDCEGRWITPGLIDCHTHLVYAGNRANEFEMRLAGATYEEVARAGGGIVSSVKSLRAANEDELVAQTLPRLDALMAEGVTTVEVKSGYGLDLDNEKKSLRAARRLANERPVTIRTTCLAAHALPPEAKGDKEAFVDLVAGTILPGVAAEKLADAVDGFCEGIAFSPEQIARVFDKARALGLPVKLHADQLSNLHGAALAASYGALSADHLEYTDEAGAAAMAKAGTVATILPGAYYFIRETKKPPVDLFRRHGVKMAVATDSNPGTSPLTSLLLTMNMAATLFGLTVDECLAGVTREAARALGLLDKTGTLEAGKSADLAIWDIERPAELVYRMGFNPLHARIWRGQ.

Residues His78 and His80 each contribute to the Fe(3+) site. Zn(2+) is bound by residues His78 and His80. Arg87, Tyr150, and His183 together coordinate 4-imidazolone-5-propanoate. Position 150 (Tyr150) interacts with N-formimidoyl-L-glutamate. Residue His248 coordinates Fe(3+). His248 serves as a coordination point for Zn(2+). Gln251 provides a ligand contact to 4-imidazolone-5-propanoate. Position 323 (Asp323) interacts with Fe(3+). A Zn(2+)-binding site is contributed by Asp323. Residues Asn325 and Gly327 each coordinate N-formimidoyl-L-glutamate. Residue Thr328 participates in 4-imidazolone-5-propanoate binding.

Belongs to the metallo-dependent hydrolases superfamily. HutI family. The cofactor is Zn(2+). Fe(3+) serves as cofactor.

It is found in the cytoplasm. The catalysed reaction is 4-imidazolone-5-propanoate + H2O = N-formimidoyl-L-glutamate. It participates in amino-acid degradation; L-histidine degradation into L-glutamate; N-formimidoyl-L-glutamate from L-histidine: step 3/3. Its function is as follows. Catalyzes the hydrolytic cleavage of the carbon-nitrogen bond in imidazolone-5-propanoate to yield N-formimidoyl-L-glutamate. It is the third step in the universal histidine degradation pathway. The polypeptide is Imidazolonepropionase (Mesorhizobium japonicum (strain LMG 29417 / CECT 9101 / MAFF 303099) (Mesorhizobium loti (strain MAFF 303099))).